A 116-amino-acid polypeptide reads, in one-letter code: Putative membrane protein insertion efficiency factor (116 aa).

This sequence belongs to the UPF0161 family.

The protein resides in the cell inner membrane. In terms of biological role, could be involved in insertion of integral membrane proteins into the membrane. The protein is Putative membrane protein insertion efficiency factor of Bartonella tribocorum (strain CIP 105476 / IBS 506).